Reading from the N-terminus, the 441-residue chain is Deoxyguanosinetriphosphate triphosphohydrolase-like protein 1 (441 aa).

The HD domain maps to 62 to 255; the sequence is RLTHSLEAAQ…MELADDIAYG (194 aa).

This sequence belongs to the dGTPase family. Type 2 subfamily.

In Vibrio cholerae serotype O1 (strain ATCC 39315 / El Tor Inaba N16961), this protein is Deoxyguanosinetriphosphate triphosphohydrolase-like protein 1.